The primary structure comprises 744 residues: Adenosylcobalamin-dependent ribonucleoside-triphosphate reductase (744 aa).

Cysteines 120 and 424 form a disulfide. An effector region-1 region spans residues 148–159 (SMPFSFLFDQLM). The effector region-2 stretch occupies residues 169 to 318 (VDENINQIPK…ICNLIGKTVV (150 aa)). Active-site residues include cysteine 413 and glutamate 415. Residues 570–631 (FHYSGYLIQR…SDNFASAGTV (62 aa)) are adenosylcobalamin-binding-1. The adenosylcobalamin-binding-2 stretch occupies residues 690-729 (LKQAPKEPISKEKYEKADNHITGNVEIVFEQTNEDQKGLE).

It belongs to the class II ribonucleoside-triphosphate reductase family. In terms of assembly, monomer. Adenosylcob(III)alamin serves as cofactor.

It carries out the reaction a 2'-deoxyribonucleoside 5'-triphosphate + [thioredoxin]-disulfide + H2O = a ribonucleoside 5'-triphosphate + [thioredoxin]-dithiol. With respect to regulation, allosterically regulated by ATP and dNTP. This chain is Adenosylcobalamin-dependent ribonucleoside-triphosphate reductase (rtpR), found in Lactobacillus gasseri (strain ATCC 33323 / DSM 20243 / BCRC 14619 / CIP 102991 / JCM 1131 / KCTC 3163 / NCIMB 11718 / NCTC 13722 / AM63).